The chain runs to 416 residues: Transmembrane protease serine 11B (416 aa).

The Cytoplasmic portion of the chain corresponds to 1-17 (MYRHGISSQRSWPLWTT). The helical; Signal-anchor for type II membrane protein transmembrane segment at 18 to 38 (IFIFLGVAAILGVTIGLLVHF) threads the bilayer. The Extracellular segment spans residues 39–416 (LAVEKTYYYQ…RNWITSKTGL (378 aa)). An SEA domain is found at 43 to 160 (KTYYYQGDFH…ASIKLMEISK (118 aa)). N72 and N107 each carry an N-linked (GlcNAc...) asparagine glycan. A Peptidase S1 domain is found at 185–415 (IVNGKSSLEG…YRNWITSKTG (231 aa)). C210 and C226 are oxidised to a cystine. Residues H225 and D270 each act as charge relay system in the active site. N315 carries N-linked (GlcNAc...) asparagine glycosylation. Cystine bridges form between C335/C351 and C362/C391. S366 acts as the Charge relay system in catalysis.

It belongs to the peptidase S1 family.

It is found in the cell membrane. With respect to regulation, inhibited by aprotinin, leupeptin, benzamidine, SERPINA1, SPINT1 and SPINT2. In terms of biological role, serine protease. The polypeptide is Transmembrane protease serine 11B (TMPRSS11B) (Homo sapiens (Human)).